Reading from the N-terminus, the 417-residue chain is Type II methyltransferase M.KpnI (417 aa).

This sequence belongs to the N(4)/N(6)-methyltransferase family.

It catalyses the reaction a 2'-deoxyadenosine in DNA + S-adenosyl-L-methionine = an N(6)-methyl-2'-deoxyadenosine in DNA + S-adenosyl-L-homocysteine + H(+). Its function is as follows. A beta subtype methylase, recognizes the double-stranded sequence 5'-GGTACC-3', methylates A-4 on both strands, and protects the DNA from cleavage by the KpnI endonuclease. In Klebsiella pneumoniae, this protein is Type II methyltransferase M.KpnI.